The sequence spans 292 residues: Elongation factor Ts (292 aa).

Residues 82–85 form an involved in Mg(2+) ion dislocation from EF-Tu region; the sequence is TDFV.

This sequence belongs to the EF-Ts family.

It is found in the cytoplasm. In terms of biological role, associates with the EF-Tu.GDP complex and induces the exchange of GDP to GTP. It remains bound to the aminoacyl-tRNA.EF-Tu.GTP complex up to the GTP hydrolysis stage on the ribosome. The protein is Elongation factor Ts of Bordetella petrii (strain ATCC BAA-461 / DSM 12804 / CCUG 43448).